The chain runs to 165 residues: Thiol peroxidase (165 aa).

The Thioredoxin domain occupies 18 to 164; the sequence is RKVGDKAPNF…YEAAIEAAKK (147 aa). The active-site Cysteine sulfenic acid (-SOH) intermediate is C60. A disulfide bridge connects residues C60 and C94.

The protein belongs to the peroxiredoxin family. Tpx subfamily. In terms of assembly, homodimer.

The catalysed reaction is a hydroperoxide + [thioredoxin]-dithiol = an alcohol + [thioredoxin]-disulfide + H2O. Thiol-specific peroxidase that catalyzes the reduction of hydrogen peroxide and organic hydroperoxides to water and alcohols, respectively. Plays a role in cell protection against oxidative stress by detoxifying peroxides. The polypeptide is Thiol peroxidase (Listeria monocytogenes serotype 4b (strain F2365)).